A 706-amino-acid polypeptide reads, in one-letter code: Putative pentatricopeptide repeat-containing protein At3g47840 (706 aa).

16 PPR repeats span residues 39 to 69, 70 to 104, 107 to 141, 142 to 172, 173 to 203, 208 to 242, 243 to 273, 274 to 308, 309 to 343, 344 to 374, 375 to 409, 410 to 444, 445 to 475, 476 to 510, 511 to 541, and 547 to 577; these read VKFDPNSHLRSLINAGNLRAARQVFDKMPHG, DIVSWTSIIKRYVTANNSDEALILFSAMRVVDHAV, DTSVLSVVLKACGQSSNIAYGESLHAYAVKTSLLS, SVYVGSSLLDMYKRVGKIDKSCRVFSEMPFR, NAVTWTAIITGLVHAGRYKEGLTYFSEMSRS, DTYTFAIALKACAGLRQVKYGKAIHTHVIVRGFVT, TLCVANSLATMYTECGEMQDGLCLFENMSER, DVVSWTSLIVAYKRIGQEVKAVETFIKMRNSQVPP, NEQTFASMFSACASLSRLVWGEQLHCNVLSLGLND, SLSVSNSMMKMYSTCGNLVSASVLFQGMRCR, DIISWSTIIGGYCQAGFGEEGFKYFSWMRQSGTKP, TDFALASLLSVSGNMAVIEGGRQVHALALCFGLEQ, NSTVRSSLINMYSKCGSIKEASMIFGETDRD, DIVSLTAMINGYAEHGKSKEAIDLFEKSLKVGFRP, DSVTFISVLTACTHSGQLDLGFHYFNMMQET, and AKEHYGCMVDLLCRAGRLSDAEKMINEMSWK. The segment at 582–657 is type E motif; it reads VWTTLLIACK…EPGWSSIKIK (76 aa). Positions 658 to 688 are type E(+) motif; the sequence is DCVSAFVSGDRFHPQSEDIYNILELAVSGAE.

This sequence belongs to the PPR family. PCMP-E subfamily.

In Arabidopsis thaliana (Mouse-ear cress), this protein is Putative pentatricopeptide repeat-containing protein At3g47840 (PCMP-E43).